The following is a 739-amino-acid chain: Phosphoribosylformylglycinamidine synthase subunit PurL (739 aa).

The active site involves His-54. Residues Tyr-57 and Lys-96 each coordinate ATP. Glu-98 is a binding site for Mg(2+). Residues 99–102 and Arg-121 contribute to the substrate site; that span reads SHNH. His-100 (proton acceptor) is an active-site residue. Asp-122 is a Mg(2+) binding site. Gln-245 serves as a coordination point for substrate. Asp-273 serves as a coordination point for Mg(2+). Residue 317-319 coordinates substrate; the sequence is ESQ. Asp-500 and Gly-537 together coordinate ATP. Mg(2+) is bound at residue Asn-538. Residue Ser-540 coordinates substrate.

The protein belongs to the FGAMS family. Monomer. Part of the FGAM synthase complex composed of 1 PurL, 1 PurQ and 2 PurS subunits.

Its subcellular location is the cytoplasm. The enzyme catalyses N(2)-formyl-N(1)-(5-phospho-beta-D-ribosyl)glycinamide + L-glutamine + ATP + H2O = 2-formamido-N(1)-(5-O-phospho-beta-D-ribosyl)acetamidine + L-glutamate + ADP + phosphate + H(+). Its pathway is purine metabolism; IMP biosynthesis via de novo pathway; 5-amino-1-(5-phospho-D-ribosyl)imidazole from N(2)-formyl-N(1)-(5-phospho-D-ribosyl)glycinamide: step 1/2. Functionally, part of the phosphoribosylformylglycinamidine synthase complex involved in the purines biosynthetic pathway. Catalyzes the ATP-dependent conversion of formylglycinamide ribonucleotide (FGAR) and glutamine to yield formylglycinamidine ribonucleotide (FGAM) and glutamate. The FGAM synthase complex is composed of three subunits. PurQ produces an ammonia molecule by converting glutamine to glutamate. PurL transfers the ammonia molecule to FGAR to form FGAM in an ATP-dependent manner. PurS interacts with PurQ and PurL and is thought to assist in the transfer of the ammonia molecule from PurQ to PurL. This chain is Phosphoribosylformylglycinamidine synthase subunit PurL, found in Exiguobacterium sp. (strain ATCC BAA-1283 / AT1b).